The chain runs to 153 residues: Ribosome maturation factor RimP (153 aa).

Belongs to the RimP family.

It is found in the cytoplasm. Functionally, required for maturation of 30S ribosomal subunits. This chain is Ribosome maturation factor RimP, found in Trichormus variabilis (strain ATCC 29413 / PCC 7937) (Anabaena variabilis).